The sequence spans 355 residues: UDP-N-acetylglucosamine--N-acetylmuramyl-(pentapeptide) pyrophosphoryl-undecaprenol N-acetylglucosamine transferase (355 aa).

Residues 15–17, N127, R163, S191, I244, 263–268, and Q288 contribute to the UDP-N-acetyl-alpha-D-glucosamine site; these read TGG and ALTVSE.

This sequence belongs to the glycosyltransferase 28 family. MurG subfamily.

Its subcellular location is the cell inner membrane. It carries out the reaction di-trans,octa-cis-undecaprenyl diphospho-N-acetyl-alpha-D-muramoyl-L-alanyl-D-glutamyl-meso-2,6-diaminopimeloyl-D-alanyl-D-alanine + UDP-N-acetyl-alpha-D-glucosamine = di-trans,octa-cis-undecaprenyl diphospho-[N-acetyl-alpha-D-glucosaminyl-(1-&gt;4)]-N-acetyl-alpha-D-muramoyl-L-alanyl-D-glutamyl-meso-2,6-diaminopimeloyl-D-alanyl-D-alanine + UDP + H(+). The protein operates within cell wall biogenesis; peptidoglycan biosynthesis. Functionally, cell wall formation. Catalyzes the transfer of a GlcNAc subunit on undecaprenyl-pyrophosphoryl-MurNAc-pentapeptide (lipid intermediate I) to form undecaprenyl-pyrophosphoryl-MurNAc-(pentapeptide)GlcNAc (lipid intermediate II). This Salmonella arizonae (strain ATCC BAA-731 / CDC346-86 / RSK2980) protein is UDP-N-acetylglucosamine--N-acetylmuramyl-(pentapeptide) pyrophosphoryl-undecaprenol N-acetylglucosamine transferase.